A 182-amino-acid polypeptide reads, in one-letter code: Ribosome maturation factor RimM (182 aa).

In terms of domain architecture, PRC barrel spans 103-182 (GDDYYWKDLM…VIEADWDPGF (80 aa)).

It belongs to the RimM family. In terms of assembly, binds ribosomal protein uS19.

Its subcellular location is the cytoplasm. In terms of biological role, an accessory protein needed during the final step in the assembly of 30S ribosomal subunit, possibly for assembly of the head region. Essential for efficient processing of 16S rRNA. May be needed both before and after RbfA during the maturation of 16S rRNA. It has affinity for free ribosomal 30S subunits but not for 70S ribosomes. In Serratia proteamaculans (strain 568), this protein is Ribosome maturation factor RimM.